The primary structure comprises 265 residues: Thiazole synthase (265 aa).

Catalysis depends on Lys106, which acts as the Schiff-base intermediate with DXP. Residues Gly167, 193-194 (AG), and 215-216 (NT) each bind 1-deoxy-D-xylulose 5-phosphate. Residues 245 to 265 (GRIPRRARAEPSSPQLGLVGS) are disordered.

It belongs to the ThiG family. In terms of assembly, homotetramer. Forms heterodimers with either ThiH or ThiS.

It localises to the cytoplasm. The catalysed reaction is [ThiS sulfur-carrier protein]-C-terminal-Gly-aminoethanethioate + 2-iminoacetate + 1-deoxy-D-xylulose 5-phosphate = [ThiS sulfur-carrier protein]-C-terminal Gly-Gly + 2-[(2R,5Z)-2-carboxy-4-methylthiazol-5(2H)-ylidene]ethyl phosphate + 2 H2O + H(+). Its pathway is cofactor biosynthesis; thiamine diphosphate biosynthesis. In terms of biological role, catalyzes the rearrangement of 1-deoxy-D-xylulose 5-phosphate (DXP) to produce the thiazole phosphate moiety of thiamine. Sulfur is provided by the thiocarboxylate moiety of the carrier protein ThiS. In vitro, sulfur can be provided by H(2)S. In Methylobacterium sp. (strain 4-46), this protein is Thiazole synthase.